The primary structure comprises 200 residues: Regulator of G-protein signaling 16 (200 aa).

Residues Cys2 and Cys12 are each lipidated (S-palmitoyl cysteine). The RGS domain maps to 65–181; the sequence is SFDLLLSSKN…LKSPAYRDLA (117 aa). 2 positions are modified to phosphotyrosine: Tyr168 and Tyr177.

In terms of assembly, interacts with GNAI1 and GNAQ. Interacts with GNAI3, GNAI3 and GNAO1. As to quaternary structure, (Microbial infection) Interacts with porcine circovirus 2 ORF3 protein. Post-translationally, palmitoylated on Cys-2 and/or Cys-12. Phosphorylated. Phosphorylation at Tyr-168 by EGFR enhances GTPase accelerating (GAP) activity toward GNAI1.

It localises to the membrane. Regulates G protein-coupled receptor signaling cascades. Inhibits signal transduction by increasing the GTPase activity of G protein alpha subunits, thereby driving them into their inactive GDP-bound form. Plays an important role in the phototransduction cascade by regulating the lifetime and effective concentration of activated transducin alpha. May regulate extra and intracellular mitogenic signals. Its function is as follows. (Microbial infection) Gets inactivated and/or degraded by porcine circovirus 2 ORF3 protein, leading to enhanced expression of IL-6 and IL-8 in infected lymphocytes. This would explain chronic inflammatory response of PCV2 infected pigs. In Sus scrofa (Pig), this protein is Regulator of G-protein signaling 16 (RGS16).